The chain runs to 184 residues: ATP synthase subunit b, chloroplastic (184 aa).

Residues 27 to 49 (LATNPINLSVVLGVLIFFGKGVL) traverse the membrane as a helical segment.

The protein belongs to the ATPase B chain family. As to quaternary structure, F-type ATPases have 2 components, F(1) - the catalytic core - and F(0) - the membrane proton channel. F(1) has five subunits: alpha(3), beta(3), gamma(1), delta(1), epsilon(1). F(0) has four main subunits: a(1), b(1), b'(1) and c(10-14). The alpha and beta chains form an alternating ring which encloses part of the gamma chain. F(1) is attached to F(0) by a central stalk formed by the gamma and epsilon chains, while a peripheral stalk is formed by the delta, b and b' chains.

The protein localises to the plastid. It is found in the chloroplast thylakoid membrane. F(1)F(0) ATP synthase produces ATP from ADP in the presence of a proton or sodium gradient. F-type ATPases consist of two structural domains, F(1) containing the extramembraneous catalytic core and F(0) containing the membrane proton channel, linked together by a central stalk and a peripheral stalk. During catalysis, ATP synthesis in the catalytic domain of F(1) is coupled via a rotary mechanism of the central stalk subunits to proton translocation. In terms of biological role, component of the F(0) channel, it forms part of the peripheral stalk, linking F(1) to F(0). The sequence is that of ATP synthase subunit b, chloroplastic from Nicotiana tomentosiformis (Tobacco).